Reading from the N-terminus, the 102-residue chain is Protein transport protein sec61 subunit beta (102 aa).

A compositionally biased stretch (polar residues) spans 1 to 15 (MSSTKASGSVKNSAA). A disordered region spans residues 1 to 53 (MSSTKASGSVKNSAASAPGGPKSQIRRRAAVEKNTKESNSGPAGARAAGAPGS). The Cytoplasmic segment spans residues 1–72 (MSSTKASGSV…DEASGFKVDP (72 aa)). The span at 41–52 (GPAGARAAGAPG) shows a compositional bias: low complexity. A helical transmembrane segment spans residues 73–93 (VVVMVLSVGFIASVFLLHIVA).

The protein belongs to the SEC61-beta family. In terms of assembly, heterotrimeric complex composed of SEC61, SBH1 and SSS1.

The protein resides in the endoplasmic reticulum membrane. Necessary for protein translocation in the endoplasmic reticulum. The polypeptide is Protein transport protein sec61 subunit beta (sbh1) (Schizosaccharomyces pombe (strain 972 / ATCC 24843) (Fission yeast)).